Here is a 139-residue protein sequence, read N- to C-terminus: Immunogenic miracidial antigen 8I (139 aa).

The disordered stretch occupies residues 61 to 139; sequence IDVGDEDYHD…PKKYGSGYKH (79 aa). Acidic residues predominate over residues 64–85; it reads GDEDYHDGDDDVDYTDDVDDVD. Polar residues predominate over residues 90 to 103; the sequence is SPSQLLQGGYQRNQ.

The protein belongs to the immunogenic miracidial antigen family.

The sequence is that of Immunogenic miracidial antigen 8I (8I) from Schistosoma japonicum (Blood fluke).